Reading from the N-terminus, the 127-residue chain is Large ribosomal subunit protein bL12 (127 aa).

This sequence belongs to the bacterial ribosomal protein bL12 family. In terms of assembly, homodimer. Part of the ribosomal stalk of the 50S ribosomal subunit. Forms a multimeric L10(L12)X complex, where L10 forms an elongated spine to which 2 to 4 L12 dimers bind in a sequential fashion. Binds GTP-bound translation factors.

Functionally, forms part of the ribosomal stalk which helps the ribosome interact with GTP-bound translation factors. Is thus essential for accurate translation. The sequence is that of Large ribosomal subunit protein bL12 from Symbiobacterium thermophilum (strain DSM 24528 / JCM 14929 / IAM 14863 / T).